Consider the following 301-residue polypeptide: ATP synthase gamma chain (301 aa).

It belongs to the ATPase gamma chain family. F-type ATPases have 2 components, CF(1) - the catalytic core - and CF(0) - the membrane proton channel. CF(1) has five subunits: alpha(3), beta(3), gamma(1), delta(1), epsilon(1). CF(0) has three main subunits: a, b and c.

The protein localises to the cell inner membrane. Produces ATP from ADP in the presence of a proton gradient across the membrane. The gamma chain is believed to be important in regulating ATPase activity and the flow of protons through the CF(0) complex. The protein is ATP synthase gamma chain of Bordetella petrii (strain ATCC BAA-461 / DSM 12804 / CCUG 43448).